Reading from the N-terminus, the 250-residue chain is PF03932 family protein CutC (250 aa).

This sequence belongs to the CutC family.

It is found in the cytoplasm. The polypeptide is PF03932 family protein CutC (Vibrio vulnificus (strain YJ016)).